The following is a 485-amino-acid chain: Vacuolar fusion protein CCZ1 homolog (485 aa).

This sequence belongs to the CCZ1 family. As to quaternary structure, component of the Mon1-Ccz1 guanyl-nucleotide exchange factor complex made up of Mon1, Ccz1 and Bulli; the interaction of Bulli with the Mon1-Ccz1 heterodimer is mediated via the C-terminal Mic1 domain of Bulli. Mon1 and Ccz1 form a stable complex which displays Rab7 GEF activity with or without Bulli; GEF activity is enhanced by Bulli possibly by improving membrane association of the complex. Interacts with Rab5 and Rab7; preferentially binds GTP-bound Rab5 and GDP-bound Rab7.

Its subcellular location is the cytoplasm. The protein localises to the cytosol. The Rab7 guanyl-nucleotide exchange factor (GEF) activity of the Mon1-Ccz1 complex is autoinhibited by the N-terminal disordered region of Mon1. GEF activity is stimulated by Rab5-mediated recruitment to membranes. In terms of biological role, part of the Mon1-Ccz1 guanyl-nucleotide exchange factor complex specific for Rab7 that promotes the exchange of GDP to GTP, converting Rab7 from an inactive GDP-bound form into an active GTP-bound form. Required for recruitment of Rab7 to endosomal and autophagosomal membranes to mediate endolysosomal and autolysosomal vesicle maturation. Required for fusion of multivesicular bodies and lysosomes but not their formation or trafficking. Involved in the replacement of Rab5 (and possibly Rab4) with Rab7, also known as Rab conversion or the Rab cascade, during endosomal maturation. The Mon1-Ccz1 complex is recruited to phosphatidylinositol 3-phosphate (PtdIns[3]P) enriched membranes by Rab5, which stimulates recruitment and guanyl-nucleotide exchange of Rab7. Together with Rab7 required for autolysosome formation in fat cells and autophagic degradation during starvation-induced basal and developmental autophagy. The protein is Vacuolar fusion protein CCZ1 homolog of Drosophila melanogaster (Fruit fly).